A 248-amino-acid chain; its full sequence is MTTMSRRYTPNIIITGTPGCGKSSHSSSLVSQLNQTLGKETTIHFKHFNISEIAKERDCIESYDAKLDTSIVDEDKLLDSLEPDLEKGGVVVDWHCCDIFPERLIDLVVVLRTDNSNLFDRLKTRNYNDLKLQENLDCEIMEVILQEAKDSYIPDIVIELRSDTAEEMDENVDRISSWVETWIEDHPDGVSNELNKQYNPDDSSDEGDDNSDSDEYELEEDEQEEEEEREEYDEETNEEMEHTEDIAQ.

ATP contacts are provided by glycine 19, glycine 21, lysine 22, serine 23, and serine 24. Positions 49 to 72 (NISEIAKERDCIESYDAKLDTSIV) are NMPbind. Residues 124 to 134 (TRNYNDLKLQE) are LID. ATP is bound at residue arginine 125. The interval 188-248 (DGVSNELNKQ…EMEHTEDIAQ (61 aa)) is disordered. The segment covering 202–238 (DSSDEGDDNSDSDEYELEEDEQEEEEEREEYDEETNE) has biased composition (acidic residues). Positions 239 to 248 (EMEHTEDIAQ) are enriched in basic and acidic residues.

It belongs to the adenylate kinase family. AK6 subfamily. In terms of assembly, interacts with small ribosomal subunit protein uS11. Not a structural component of 43S pre-ribosomes, but transiently interacts with them by binding to uS11.

It localises to the cytoplasm. The protein resides in the nucleus. It catalyses the reaction AMP + ATP = 2 ADP. The catalysed reaction is ATP + H2O = ADP + phosphate + H(+). In terms of biological role, broad-specificity nucleoside monophosphate (NMP) kinase that catalyzes the reversible transfer of the terminal phosphate group between nucleoside triphosphates and monophosphates. Also has ATPase activity. Involved in the late cytoplasmic maturation steps of the 40S ribosomal particles, specifically 18S rRNA maturation. While NMP activity is not required for ribosome maturation, ATPase activity is. Associates transiently with small ribosomal subunit protein uS11. ATP hydrolysis breaks the interaction with uS11. May temporarily remove uS11 from the ribosome to enable a conformational change of the ribosomal RNA that is needed for the final maturation step of the small ribosomal subunit. Its NMP activity may have a role in nuclear energy homeostasis. Induces transcription of mating-type proteins ALPHA1 and ALPHA2 and moderately represses transcription of mating-type protein A1 in response to hemoglobin and growth signals. Involved in the induction of a high affinity fibronectin receptor by sub-inhibitory dosages of caspofungin. In Candida albicans (strain SC5314 / ATCC MYA-2876) (Yeast), this protein is Adenylate kinase isoenzyme 6 homolog HBR1 (HBR1).